We begin with the raw amino-acid sequence, 1005 residues long: DNA polymerase (1005 aa).

Belongs to the DNA polymerase type-B family. As to quaternary structure, interacts with OPG148. Component of the Uracil-DNA glycosylase(UDG)-OPG148-polymerase complex; OPG148 and OPG116/UDG form a heterodimeric processivity factor that associates with OPG071 to form the processive polymerase holoenzyme.

The catalysed reaction is DNA(n) + a 2'-deoxyribonucleoside 5'-triphosphate = DNA(n+1) + diphosphate. Catalyzes DNA synthesis. Acquires processivity by associating with a heterodimeric processivity factor comprised of the viral OPG148 and OPG116 proteins, thereby forming the DNA polymerase holoenzyme. Displays 3'- to 5' exonuclease activity. Might participate in viral DNA recombination. Does not perform OPG116/D4synthesis across an abasic site. This chain is DNA polymerase (OPG071), found in Variola virus.